The following is a 191-amino-acid chain: Inosine triphosphate pyrophosphatase (191 aa).

Threonine 12–lysine 17 is a binding site for ITP. A Mg(2+)-binding site is contributed by glutamate 42. ITP-binding positions include lysine 54, aspartate 70–threonine 71, lysine 87, phenylalanine 145–aspartate 148, lysine 168, and histidine 173–arginine 174.

This sequence belongs to the HAM1 NTPase family. As to quaternary structure, homodimer. Requires Mg(2+) as cofactor. The cofactor is Mn(2+).

The protein localises to the cytoplasm. It carries out the reaction ITP + H2O = IMP + diphosphate + H(+). It catalyses the reaction dITP + H2O = dIMP + diphosphate + H(+). The enzyme catalyses XTP + H2O = XMP + diphosphate + H(+). Its function is as follows. Pyrophosphatase that hydrolyzes non-canonical purine nucleotides such as inosine triphosphate (ITP), deoxyinosine triphosphate (dITP) or xanthosine 5'-triphosphate (XTP) to their respective monophosphate derivatives. The enzyme does not distinguish between the deoxy- and ribose forms. Probably excludes non-canonical purines from RNA and DNA precursor pools, thus preventing their incorporation into RNA and DNA and avoiding chromosomal lesions. The sequence is that of Inosine triphosphate pyrophosphatase from Phytophthora infestans (strain T30-4) (Potato late blight agent).